The chain runs to 259 residues: Phosphate import ATP-binding protein PstB (259 aa).

The region spanning 13–254 (LEVNNLNFHY…PRLQRTEDYI (242 aa)) is the ABC transporter domain. ATP is bound at residue 45–52 (GPSGCGKS).

The protein belongs to the ABC transporter superfamily. Phosphate importer (TC 3.A.1.7) family. As to quaternary structure, the complex is composed of two ATP-binding proteins (PstB), two transmembrane proteins (PstC and PstA) and a solute-binding protein (PstS).

It localises to the cell inner membrane. It carries out the reaction phosphate(out) + ATP + H2O = ADP + 2 phosphate(in) + H(+). Functionally, part of the ABC transporter complex PstSACB involved in phosphate import. Responsible for energy coupling to the transport system. This chain is Phosphate import ATP-binding protein PstB, found in Pasteurella multocida (strain Pm70).